The sequence spans 137 residues: Putative pre-16S rRNA nuclease (137 aa).

This sequence belongs to the YqgF nuclease family.

Its subcellular location is the cytoplasm. Functionally, could be a nuclease involved in processing of the 5'-end of pre-16S rRNA. This is Putative pre-16S rRNA nuclease from Mycoplasmopsis synoviae (strain 53) (Mycoplasma synoviae).